The sequence spans 304 residues: N-acetylmuramic acid 6-phosphate etherase (304 aa).

One can recognise an SIS domain in the interval 62 to 225 (IVTAFRQGGR…TTASMILMGK (164 aa)). Glutamate 90 functions as the Proton donor in the catalytic mechanism. The active site involves glutamate 121.

This sequence belongs to the GCKR-like family. MurNAc-6-P etherase subfamily. Homodimer.

It catalyses the reaction N-acetyl-D-muramate 6-phosphate + H2O = N-acetyl-D-glucosamine 6-phosphate + (R)-lactate. It participates in amino-sugar metabolism; 1,6-anhydro-N-acetylmuramate degradation. It functions in the pathway amino-sugar metabolism; N-acetylmuramate degradation. The protein operates within cell wall biogenesis; peptidoglycan recycling. Functionally, specifically catalyzes the cleavage of the D-lactyl ether substituent of MurNAc 6-phosphate, producing GlcNAc 6-phosphate and D-lactate. Together with AnmK, is also required for the utilization of anhydro-N-acetylmuramic acid (anhMurNAc) either imported from the medium or derived from its own cell wall murein, and thus plays a role in cell wall recycling. The sequence is that of N-acetylmuramic acid 6-phosphate etherase from Actinobacillus succinogenes (strain ATCC 55618 / DSM 22257 / CCUG 43843 / 130Z).